The primary structure comprises 396 residues: S-adenosylmethionine synthase (396 aa).

His16 serves as a coordination point for ATP. Asp18 is a Mg(2+) binding site. K(+) is bound at residue Glu44. L-methionine contacts are provided by Glu57 and Gln100. A flexible loop region spans residues 100-110; the sequence is QSPDIAQGVDR. ATP is bound by residues 167-169, 232-233, Asp241, 247-248, Ala264, and Lys268; these read DAK, RF, and RK. Asp241 contributes to the L-methionine binding site. Lys272 contacts L-methionine.

The protein belongs to the AdoMet synthase family. As to quaternary structure, homotetramer; dimer of dimers. It depends on Mg(2+) as a cofactor. Requires K(+) as cofactor.

Its subcellular location is the cytoplasm. The catalysed reaction is L-methionine + ATP + H2O = S-adenosyl-L-methionine + phosphate + diphosphate. It participates in amino-acid biosynthesis; S-adenosyl-L-methionine biosynthesis; S-adenosyl-L-methionine from L-methionine: step 1/1. Functionally, catalyzes the formation of S-adenosylmethionine (AdoMet) from methionine and ATP. The overall synthetic reaction is composed of two sequential steps, AdoMet formation and the subsequent tripolyphosphate hydrolysis which occurs prior to release of AdoMet from the enzyme. The chain is S-adenosylmethionine synthase from Ralstonia pickettii (strain 12J).